The sequence spans 287 residues: Mitochondrial glycine transporter A (287 aa).

Solcar repeat units lie at residues 7 to 97 (HPAV…LKQR), 104 to 188 (PGPL…TKHL), and 198 to 282 (YAPV…LMAQ). 6 helical membrane-spanning segments follow: residues 13–38 (FMCGSLSGTCSTLLFQPLDLVKTRLQ), 72–98 (GVSPSFVRCIPGVGIYFSTYFTLKQRY), 110–135 (VLLGAGARCVAGVFMLPVTVIKTRFE), 163–186 (GLMATLLRDAPFSGIYVMIYSQTK), 202–228 (ANFSCGVLAGVLASVLTQPADVVKTHI), and 257–275 (GAVPRSLRRTMMAAMAWTV).

It belongs to the mitochondrial carrier (TC 2.A.29) family. SLC25A38 subfamily. At 24 hours post-fertilization, expressed predominantly in posterior blood island, posterior cardinal vein and circulating blood, as well as in somites, brain and retina. At 34 hours post-fertilization, becomes restricted to posterior blood island and circulating blood.

It localises to the mitochondrion inner membrane. The enzyme catalyses glycine(in) = glycine(out). In terms of biological role, mitochondrial glycine transporter that imports glycine into the mitochondrial matrix. Plays an important role in providing glycine for the first enzymatic step in heme biosynthesis, the condensation of glycine with succinyl-CoA to produce 5-aminolevulinate (ALA) in the mitochondrial matrix. Required during erythropoiesis. Functionally, may play a role as pro-apoptotic protein that induces caspase-dependent apoptosis. The protein is Mitochondrial glycine transporter A (slc25a38a) of Danio rerio (Zebrafish).